A 322-amino-acid chain; its full sequence is tRNA U34 carboxymethyltransferase (322 aa).

Residues Lys91, Trp105, Lys110, Gly129, 179 to 180, Met195, Tyr199, and Arg314 contribute to the carboxy-S-adenosyl-L-methionine site; that span reads LE.

The protein belongs to the class I-like SAM-binding methyltransferase superfamily. CmoB family. Homotetramer.

The enzyme catalyses carboxy-S-adenosyl-L-methionine + 5-hydroxyuridine(34) in tRNA = 5-carboxymethoxyuridine(34) in tRNA + S-adenosyl-L-homocysteine + H(+). Functionally, catalyzes carboxymethyl transfer from carboxy-S-adenosyl-L-methionine (Cx-SAM) to 5-hydroxyuridine (ho5U) to form 5-carboxymethoxyuridine (cmo5U) at position 34 in tRNAs. The protein is tRNA U34 carboxymethyltransferase of Pseudomonas aeruginosa (strain ATCC 15692 / DSM 22644 / CIP 104116 / JCM 14847 / LMG 12228 / 1C / PRS 101 / PAO1).